A 142-amino-acid polypeptide reads, in one-letter code: UPF0336 protein PPA1896 (142 aa).

This sequence belongs to the UPF0336 family.

In Cutibacterium acnes (strain DSM 16379 / KPA171202) (Propionibacterium acnes), this protein is UPF0336 protein PPA1896.